A 321-amino-acid polypeptide reads, in one-letter code: Lipoyl synthase (321 aa).

[4Fe-4S] cluster contacts are provided by cysteine 68, cysteine 73, cysteine 79, cysteine 94, cysteine 98, cysteine 101, and serine 308. In terms of domain architecture, Radical SAM core spans 80–297 (FNHGTATFMI…KALADELGFT (218 aa)).

Belongs to the radical SAM superfamily. Lipoyl synthase family. [4Fe-4S] cluster serves as cofactor.

The protein localises to the cytoplasm. It catalyses the reaction [[Fe-S] cluster scaffold protein carrying a second [4Fe-4S](2+) cluster] + N(6)-octanoyl-L-lysyl-[protein] + 2 oxidized [2Fe-2S]-[ferredoxin] + 2 S-adenosyl-L-methionine + 4 H(+) = [[Fe-S] cluster scaffold protein] + N(6)-[(R)-dihydrolipoyl]-L-lysyl-[protein] + 4 Fe(3+) + 2 hydrogen sulfide + 2 5'-deoxyadenosine + 2 L-methionine + 2 reduced [2Fe-2S]-[ferredoxin]. It functions in the pathway protein modification; protein lipoylation via endogenous pathway; protein N(6)-(lipoyl)lysine from octanoyl-[acyl-carrier-protein]: step 2/2. Functionally, catalyzes the radical-mediated insertion of two sulfur atoms into the C-6 and C-8 positions of the octanoyl moiety bound to the lipoyl domains of lipoate-dependent enzymes, thereby converting the octanoylated domains into lipoylated derivatives. In Shewanella putrefaciens (strain CN-32 / ATCC BAA-453), this protein is Lipoyl synthase.